Reading from the N-terminus, the 716-residue chain is Macrophage-expressed gene 1 protein (716 aa).

Residues 1 to 20 form the signal peptide; it reads MNNFRATILFWAVAAWVTSG. The MACPF domain occupies 30-345; the sequence is GVQKCKNALK…TAVKRYYTFN (316 aa). C34 and C70 are oxidised to a cystine. The next 2 beta stranded transmembrane spans lie at 113-120 and 127-132; these read YSINTELS and GKFSTE. 2 N-linked (GlcNAc...) asparagine glycosylation sites follow: N168 and N185. 2 consecutive transmembrane segments (beta stranded) span residues 235 to 244 and 248 to 256; these read AVTASAGLAF and VNFKFEENY. N269 carries N-linked (GlcNAc...) asparagine glycosylation. C350 and C369 are disulfide-bonded. The N-linked (GlcNAc...) asparagine glycan is linked to N375. Disulfide bonds link C385/C397, C435/C449, C439/C445, C534/C572, and C557/C577. A P2 region spans residues 413–656; the sequence is PSGYSPVRLL…GDGGGLSGGA (244 aa). A helical transmembrane segment spans residues 656-676; it reads AAAGVTLGVTTILAVVITLAI. A disordered region spans residues 693-716; the sequence is RQSLVPGTAATGDTTYQEQGQSPA. Residues 703–716 show a composition bias toward polar residues; sequence TGDTTYQEQGQSPA.

It belongs to the MPEG1 family. In terms of assembly, homooligomer; predominantly forms a homooligomeric arc-shaped pore complex instead of complete rings of 16 subunits. Post-translationally, proteolytically processed in two steps to generate the Macrophage-expressed gene 1 protein, processed form: cleaved by trypsin in proximity of the helical transmembrane domain releases the ectodomain into the lysosomal lumen to orient the pore-forming domain toward the endogenous membranes, and processed by the asparagine endopeptidase (LGMN). Proteolytic processing in antigen-containing vesicles is pH-dependent. In terms of processing, monoubiquitinated in response to bacterial infection; ubiquitination is required for vesicular localization and antibacterial activity and can be blocked by bacterial cell cycle inhibiting factor (cif).

Its subcellular location is the cytoplasmic vesicle membrane. It localises to the cytoplasmic vesicle. It is found in the phagosome membrane. Its activity is regulated as follows. Forms arc- and ring-shaped pre-pores on top of the membrane at neutral to slightly acidic pH conditions and converts to pores upon acidification. Undergoes transition from the pre-pore to the pore in a processive clockwise hand-over-hand process. In the pore state, 2 alpha-helical regions refold into transmembrane hairpins (TMH1 and TMH2) in each protomer that form in the ensemble complex giant beta-barrel transmembrane pores. Functionally, pore-forming protein involved in both innate and adaptive immunity. Plays a central role in antigen cross-presentation in dendritic cells by forming a pore in antigen-containing compartments, thereby promoting delivery of antigens for cross-presentation. Also involved in innate immune response following bacterial infection; shows antibacterial activity against a wide spectrum of Gram-positive, Gram-negative and acid-fast bacteria. Reduces the viability of the intracytosolic pathogen L.monocytogenes by inhibiting acidification of the phagocytic vacuole of host cells which restricts bacterial translocation from the vacuole to the cytosol. Required for the antibacterial activity of reactive oxygen species and nitric oxide. Pore-forming protein that plays a central role in antigen cross-presentation in dendritic cells by mediating delivery of antigens for cross-presentation. Dendritic cells bridge innate and adaptive immunity by capturing exogenous antigens on MHC class-I molecules and presenting them to naive CD8(+) T-cells. Acts by forming a pore in antigen-containing compartments, promoting the release of antigens into the cytosol, enabling generation of MHCI:peptide complexes and T-cell priming. The polypeptide is Macrophage-expressed gene 1 protein (MPEG1) (Pongo abelii (Sumatran orangutan)).